The sequence spans 492 residues: N-succinylglutamate 5-semialdehyde dehydrogenase (492 aa).

Glycine 220 to glycine 225 is an NAD(+) binding site. Active-site residues include glutamate 243 and cysteine 277.

Belongs to the aldehyde dehydrogenase family. AstD subfamily.

The enzyme catalyses N-succinyl-L-glutamate 5-semialdehyde + NAD(+) + H2O = N-succinyl-L-glutamate + NADH + 2 H(+). Its pathway is amino-acid degradation; L-arginine degradation via AST pathway; L-glutamate and succinate from L-arginine: step 4/5. Catalyzes the NAD-dependent reduction of succinylglutamate semialdehyde into succinylglutamate. This chain is N-succinylglutamate 5-semialdehyde dehydrogenase, found in Escherichia coli (strain 55989 / EAEC).